The sequence spans 111 residues: Large ribosomal subunit protein uL22 (111 aa).

This sequence belongs to the universal ribosomal protein uL22 family. In terms of assembly, part of the 50S ribosomal subunit.

Functionally, this protein binds specifically to 23S rRNA; its binding is stimulated by other ribosomal proteins, e.g. L4, L17, and L20. It is important during the early stages of 50S assembly. It makes multiple contacts with different domains of the 23S rRNA in the assembled 50S subunit and ribosome. The globular domain of the protein is located near the polypeptide exit tunnel on the outside of the subunit, while an extended beta-hairpin is found that lines the wall of the exit tunnel in the center of the 70S ribosome. This Clostridium tetani (strain Massachusetts / E88) protein is Large ribosomal subunit protein uL22.